We begin with the raw amino-acid sequence, 227 residues long: Germin-like protein 3-3 (227 aa).

Residues M1–A26 form the signal peptide. A disulfide bridge connects residues C36 and C51. Residues S65–E217 form the Cupin type-1 domain. Residues N78 and N81 are each glycosylated (N-linked (GlcNAc...) asparagine). Mn(2+) contacts are provided by H114, H116, E121, and H163.

The protein belongs to the germin family. Oligomer (believed to be a pentamer but probably hexamer).

The protein resides in the secreted. It localises to the extracellular space. It is found in the apoplast. May play a role in plant defense. Probably has no oxalate oxidase activity even if the active site is conserved. The chain is Germin-like protein 3-3 from Oryza sativa subsp. japonica (Rice).